A 571-amino-acid chain; its full sequence is Zinc finger protein 181 (571 aa).

The KRAB domain occupies 4–76; it reads VTFNDVAIDF…EKKLSKGMIP (73 aa). Residues lysine 109 and lysine 126 each participate in a glycyl lysine isopeptide (Lys-Gly) (interchain with G-Cter in SUMO2) cross-link. C2H2-type zinc fingers lie at residues 237 to 259, 265 to 287, 293 to 315, 321 to 343, 349 to 371, 377 to 399, 405 to 427, 433 to 455, 461 to 483, 489 to 511, and 517 to 539; these read YTCS…WRIH, YECR…LISH, YKCI…QSTH, YECM…LRIH, YECR…QKIH, YECR…QRIH, YECN…QSIH, FECQ…LRNH, YECS…HRIH, YECI…QRIH, and YKCN…QRVH.

Belongs to the krueppel C2H2-type zinc-finger protein family.

It is found in the nucleus. Functionally, may be involved in transcriptional regulation. This is Zinc finger protein 181 (ZNF181) from Homo sapiens (Human).